A 776-amino-acid chain; its full sequence is MPVSTRASAAGGQPWSSAAPAPASAPGRGGARREILTNHHHHGLKEKMRALTLFYEQHKQQLASSQGGGARGRRSIQYAVGEVGGDENGRNAEEEDDVGRKRHDAVPAAVLRENMAPPEERAPPPPPAPPPKSSHVVVFSRQADPTEKENVSHGGIATMSCPIKKAAPALPAPAARKLSLGGGMAARLKTAGEAGAGNGDAAGSRIMVFVRLRPMSRKEKDAGSRSCVKIVNKKDVYLTEFASETDYLRLKRVRGRHFCFDSSFPDTTTQAEVYSTTTSDLVEGVLQGRNGTVFCYGATGAGKTYTMLGTMESPGVMVLAIKDLFTKVRQRSHDGNHSIQLSYLEVYNETVRDLLSPGRPLLLREDKQGTVAAGLTHYRAYSTDEVMKLLQQGNQNRTTEPTRVNETSSRSHAILQVIVEYRSIDGGSIVTRVGKLSLIDLAGSERALATDQRTQRSIEGANINRSLLALSSCINALVEGKKHIPYRNSKLTQLLKDSLGGSCNTVMIANISPSNLSFGETQNTLHWADRAKEIKTKALTTANEEVLRVTDSETDQAKLVLELQKENSELRQQLARQQQKLLTVQAQTLASNASPQQSPAPSAQISTPCSTQRKVKRSILAGNCFNTPDSKRPAAENAQVRDLQRKVKAMEAEIEKMKKEHLLQLKQKDEFIRDLINRKTSNVPEAATCERRVATRASVRKAQKDAAAAGELRSPSHRFTSPVPTAKKRTFWDIGGNSPSTLAVNGRKTRSHVAAETPKGTSMLLQPGFARQRAIH.

Disordered regions lie at residues 1-31 (MPVS…RGGA) and 80-135 (VGEV…KSSH). Residues 7 to 26 (ASAAGGQPWSSAAPAPASAP) show a composition bias toward low complexity. The span at 123-132 (PPPPPAPPPK) shows a compositional bias: pro residues. The Kinesin motor domain occupies 205-534 (RIMVFVRLRP…LHWADRAKEI (330 aa)). An ATP-binding site is contributed by 297–304 (GATGAGKT). A coiled-coil region spans residues 554–592 (TDQAKLVLELQKENSELRQQLARQQQKLLTVQAQTLASN). The interval 590 to 611 (ASNASPQQSPAPSAQISTPCST) is disordered. Positions 593-604 (ASPQQSPAPSAQ) are enriched in low complexity. Residues 634–671 (AAENAQVRDLQRKVKAMEAEIEKMKKEHLLQLKQKDEF) adopt a coiled-coil conformation.

It belongs to the TRAFAC class myosin-kinesin ATPase superfamily. Kinesin family. KIN-8 subfamily.

This Oryza sativa subsp. japonica (Rice) protein is Kinesin-like protein KIN-8A.